Reading from the N-terminus, the 545-residue chain is Protein FAR1-RELATED SEQUENCE 9 (545 aa).

In terms of domain architecture, FAR1 spans 22 to 65; sequence LNYLKRRQLENPGFLYAIEDDCGNVFWADPTCRLNYTYFGDTLV. An MULE domain is found at 66–150; it reads FDTTYRRGKR…RVFSQTRLRF (85 aa). The SWIM-type zinc-finger motif lies at 345–381; that stretch reads HTVSFDSLEVKANCSCQMFEYSGIICRHILAVFSAKN. The interval 460 to 495 is disordered; the sequence is SNRTPGTRLPNGEAYPSEEARETANATNHPGGEKER. A coiled-coil region spans residues 492–545; the sequence is EKERTILELTAELERTGQRCEVYRANLLSILRDMEEQKFQLSLKVQNARLSLKE.

It belongs to the FHY3/FAR1 family. In terms of tissue distribution, expressed in hypocotyls, rosette and cauline leaves, inflorescences stems, flowers and siliques.

It is found in the nucleus. Functionally, putative transcription activator involved in regulating light control of development. May act as a negative regulator specific to phyB signaling. The sequence is that of Protein FAR1-RELATED SEQUENCE 9 (FRS9) from Arabidopsis thaliana (Mouse-ear cress).